Reading from the N-terminus, the 369-residue chain is Anhydro-N-acetylmuramic acid kinase (369 aa).

An ATP-binding site is contributed by 12 to 19 (GTSLDGVD).

The protein belongs to the anhydro-N-acetylmuramic acid kinase family.

It catalyses the reaction 1,6-anhydro-N-acetyl-beta-muramate + ATP + H2O = N-acetyl-D-muramate 6-phosphate + ADP + H(+). It functions in the pathway amino-sugar metabolism; 1,6-anhydro-N-acetylmuramate degradation. The protein operates within cell wall biogenesis; peptidoglycan recycling. Its function is as follows. Catalyzes the specific phosphorylation of 1,6-anhydro-N-acetylmuramic acid (anhMurNAc) with the simultaneous cleavage of the 1,6-anhydro ring, generating MurNAc-6-P. Is required for the utilization of anhMurNAc either imported from the medium or derived from its own cell wall murein, and thus plays a role in cell wall recycling. This Shigella flexneri serotype 5b (strain 8401) protein is Anhydro-N-acetylmuramic acid kinase.